Reading from the N-terminus, the 275-residue chain is Vitamin B12-binding protein (275 aa).

The first 19 residues, 1–19 (MMNKICLYLPLFFSSLTMA), serve as a signal peptide directing secretion. The 248-residue stretch at 25-272 (RVISLAPHAT…EVCEHFESVK (248 aa)) folds into the Fe/B12 periplasmic-binding domain. Cys185 and Cys265 form a disulfide bridge.

Belongs to the BtuF family. As to quaternary structure, the complex is composed of two ATP-binding proteins (BtuD), two transmembrane proteins (BtuC) and a solute-binding protein (BtuF).

Its subcellular location is the periplasm. In terms of biological role, part of the ABC transporter complex BtuCDF involved in vitamin B12 import. Binds vitamin B12 and delivers it to the periplasmic surface of BtuC. This Vibrio parahaemolyticus serotype O3:K6 (strain RIMD 2210633) protein is Vitamin B12-binding protein.